The primary structure comprises 614 residues: Probable ATP-dependent RNA helicase DDX5 (614 aa).

The segment covering 1–15 has biased composition (basic and acidic residues); sequence MSGYSSDRDRGRDRG. A disordered region spans residues 1–39; sequence MSGYSSDRDRGRDRGFGAPRFGGSRAGPLSGKKFGNPGE. The residue at position 24 (serine 24) is a Phosphoserine. Lysine 32 is modified (N6-acetyllysine; alternate). Lysine 32 participates in a covalent cross-link: Glycyl lysine isopeptide (Lys-Gly) (interchain with G-Cter in SUMO2); alternate. 2 positions are modified to N6-acetyllysine: lysine 33 and lysine 40. A Glycyl lysine isopeptide (Lys-Gly) (interchain with G-Cter in SUMO2) cross-link involves residue lysine 45. Lysine 53 participates in a covalent cross-link: Glycyl lysine isopeptide (Lys-Gly) (interchain with G-Cter in SUMO2); alternate. Lysine 53 participates in a covalent cross-link: Glycyl lysine isopeptide (Lys-Gly) (interchain with G-Cter in SUMO); alternate. Lysine 53 participates in a covalent cross-link: Glycyl lysine isopeptide (Lys-Gly) (interchain with G-Cter in SUMO1); alternate. A Q motif motif is present at residues 94 to 122; sequence LNFYEANFPANVMDVIARQNFTEPTAIQA. ATP contacts are provided by residues 114–116, glutamine 121, and 138–145; these read FTE and AQTGSGKT. The Helicase ATP-binding domain occupies 125-300; sequence WPVALSGLDM…EDFLKDYIHI (176 aa). Position 236 is an N6-acetyllysine (lysine 236). The DEAD box motif lies at 248-251; that stretch reads DEAD. The residue at position 297 (tyrosine 297) is a Phosphotyrosine. Residues 328 to 475 form the Helicase C-terminal domain; that stretch reads KLIRLMEEIM…AINPKLLQLV (148 aa). Glycyl lysine isopeptide (Lys-Gly) (interchain with G-Cter in SUMO2) cross-links involve residues lysine 340, lysine 343, lysine 388, lysine 391, lysine 411, lysine 437, lysine 451, and lysine 470. The disordered stretch occupies residues 477 to 504; the sequence is DRGSGRSRGRGGMKDDRRDRYSAGKRGG. The tract at residues 477–614 is transactivation domain; that stretch reads DRGSGRSRGR…GYPMPTGYSQ (138 aa). A Phosphoserine modification is found at serine 480. Residues 488–498 show a composition bias toward basic and acidic residues; the sequence is GMKDDRRDRYS. Phosphoserine is present on serine 520. A Glycyl lysine isopeptide (Lys-Gly) (interchain with G-Cter in SUMO2) cross-link involves residue lysine 523.

The protein belongs to the DEAD box helicase family. DDX5/DBP2 subfamily. In terms of assembly, identified in the spliceosome C complex. Component of a ribonucleoprotein complex containing mRNAs and RNA-binding proteins including DDX5, HNRNPH2 and SRSF1 as well as splicing regulator ARVCF. Interacts with RBM4; the interaction occurs in an RNA-independent manner. Interacts with AGO1 and AGO2. Interacts with ESR1, AR, EP300, CREBBP, POLR2A, TP53, RUNX2 and HDAC1. Self-associates. Interacts with DDX17. Interacts with BRDT. The large PER complex involved in the repression of transcriptional termination is composed of at least PER2, CDK9, DDX5, DHX9, NCBP1 and POLR2A (active). Interacts with DHX36; this interaction occurs in a RNA-dependent manner. Interacts with NUPR1. Interacts with ERCC6. Interacts with DDX3X in the cytoplasm; this interaction may be more efficient when both proteins are unphosphorylated. Arg-502 is dimethylated, probably to asymmetric dimethylarginine. In terms of processing, sumoylated; sumoylation, promoted by PIAS1, promotes interaction with HDAC1 and transcriptional repression activity. Sumoylation also significantly increases stability, and reduces polyubiquitination. Post-translationally, polyubiquitinated, leading to proteasomal degradation. Weakly phosphorylated in the G1/S phase of the cell cycle and much more at G2/M, especially at Thr and Tyr residues.

The protein localises to the nucleus. The protein resides in the nucleolus. It is found in the nucleus speckle. It localises to the cytoplasm. It catalyses the reaction ATP + H2O = ADP + phosphate + H(+). Functionally, involved in the alternative regulation of pre-mRNA splicing; its RNA helicase activity is necessary for increasing tau exon 10 inclusion and occurs in a RBM4-dependent manner. Binds to the tau pre-mRNA in the stem-loop region downstream of exon 10. The rate of ATP hydrolysis is highly stimulated by single-stranded RNA. Involved in transcriptional regulation; the function is independent of the RNA helicase activity. Transcriptional coactivator for androgen receptor AR but probably not ESR1. Synergizes with DDX17 and SRA1 RNA to activate MYOD1 transcriptional activity and involved in skeletal muscle differentiation. Transcriptional coactivator for p53/TP53 and involved in p53/TP53 transcriptional response to DNA damage and p53/TP53-dependent apoptosis. Transcriptional coactivator for RUNX2 and involved in regulation of osteoblast differentiation. Acts as a transcriptional repressor in a promoter-specific manner; the function probably involves association with histone deacetylases, such as HDAC1. As component of a large PER complex is involved in the inhibition of 3' transcriptional termination of circadian target genes such as PER1 and NR1D1 and the control of the circadian rhythms. The polypeptide is Probable ATP-dependent RNA helicase DDX5 (DDX5) (Homo sapiens (Human)).